A 156-amino-acid polypeptide reads, in one-letter code: Small ribosomal subunit protein uS7 (156 aa).

This sequence belongs to the universal ribosomal protein uS7 family. In terms of assembly, part of the 30S ribosomal subunit. Contacts proteins S9 and S11.

Functionally, one of the primary rRNA binding proteins, it binds directly to 16S rRNA where it nucleates assembly of the head domain of the 30S subunit. Is located at the subunit interface close to the decoding center, probably blocks exit of the E-site tRNA. This Bordetella bronchiseptica (strain ATCC BAA-588 / NCTC 13252 / RB50) (Alcaligenes bronchisepticus) protein is Small ribosomal subunit protein uS7.